A 193-amino-acid polypeptide reads, in one-letter code: Holliday junction branch migration complex subunit RuvA (193 aa).

The domain I stretch occupies residues 1–64 (MIGRIAGILL…EDANLLYGFL (64 aa)). The domain II stretch occupies residues 65–139 (TPQERTTFRE…GKLGADLGEL (75 aa)). Residues 139-143 (LAGAA) are flexible linker. The domain III stretch occupies residues 144–193 (SPSDHATDILNALLALGYSEKEGLAAIKNVPAGTGVSEGIKLALKALSKV).

It belongs to the RuvA family. As to quaternary structure, homotetramer. Forms an RuvA(8)-RuvB(12)-Holliday junction (HJ) complex. HJ DNA is sandwiched between 2 RuvA tetramers; dsDNA enters through RuvA and exits via RuvB. An RuvB hexamer assembles on each DNA strand where it exits the tetramer. Each RuvB hexamer is contacted by two RuvA subunits (via domain III) on 2 adjacent RuvB subunits; this complex drives branch migration. In the full resolvosome a probable DNA-RuvA(4)-RuvB(12)-RuvC(2) complex forms which resolves the HJ.

The protein localises to the cytoplasm. The RuvA-RuvB-RuvC complex processes Holliday junction (HJ) DNA during genetic recombination and DNA repair, while the RuvA-RuvB complex plays an important role in the rescue of blocked DNA replication forks via replication fork reversal (RFR). RuvA specifically binds to HJ cruciform DNA, conferring on it an open structure. The RuvB hexamer acts as an ATP-dependent pump, pulling dsDNA into and through the RuvAB complex. HJ branch migration allows RuvC to scan DNA until it finds its consensus sequence, where it cleaves and resolves the cruciform DNA. The polypeptide is Holliday junction branch migration complex subunit RuvA (Burkholderia lata (strain ATCC 17760 / DSM 23089 / LMG 22485 / NCIMB 9086 / R18194 / 383)).